Consider the following 188-residue polypeptide: Peptidyl-tRNA hydrolase (188 aa).

Phe-15 is a binding site for tRNA. The active-site Proton acceptor is His-20. The tRNA site is built by Tyr-64, Asn-66, and Asn-112.

The protein belongs to the PTH family. In terms of assembly, monomer.

Its subcellular location is the cytoplasm. It carries out the reaction an N-acyl-L-alpha-aminoacyl-tRNA + H2O = an N-acyl-L-amino acid + a tRNA + H(+). Its function is as follows. Hydrolyzes ribosome-free peptidyl-tRNAs (with 1 or more amino acids incorporated), which drop off the ribosome during protein synthesis, or as a result of ribosome stalling. In terms of biological role, catalyzes the release of premature peptidyl moieties from peptidyl-tRNA molecules trapped in stalled 50S ribosomal subunits, and thus maintains levels of free tRNAs and 50S ribosomes. The polypeptide is Peptidyl-tRNA hydrolase (Borreliella burgdorferi (strain ATCC 35210 / DSM 4680 / CIP 102532 / B31) (Borrelia burgdorferi)).